The following is a 159-amino-acid chain: MGVYTFENEYTSEIPPPRLFKAFVLDADNLIPKIAPQAIKHAEILEGDGGPGTIKKITFGEGSQYGYVKHKIDSVDEANYSYAYTLIEGDALTDTIEKVSYETKLVASGSGSIIKSISHYHTKGDVEIKEEHVKAGKEKAHGLFKLIESYLKGHPDAYN.

It belongs to the BetVI family.

This is Major allergen Mal d 1 from Malus domestica (Apple).